Here is a 414-residue protein sequence, read N- to C-terminus: Serine hydroxymethyltransferase (414 aa).

(6S)-5,6,7,8-tetrahydrofolate is bound by residues L121 and 125 to 127; that span reads GHL. K229 carries the N6-(pyridoxal phosphate)lysine modification.

This sequence belongs to the SHMT family. In terms of assembly, homodimer. Pyridoxal 5'-phosphate serves as cofactor.

It is found in the cytoplasm. It carries out the reaction (6R)-5,10-methylene-5,6,7,8-tetrahydrofolate + glycine + H2O = (6S)-5,6,7,8-tetrahydrofolate + L-serine. The protein operates within one-carbon metabolism; tetrahydrofolate interconversion. Its pathway is amino-acid biosynthesis; glycine biosynthesis; glycine from L-serine: step 1/1. In terms of biological role, catalyzes the reversible interconversion of serine and glycine with tetrahydrofolate (THF) serving as the one-carbon carrier. This reaction serves as the major source of one-carbon groups required for the biosynthesis of purines, thymidylate, methionine, and other important biomolecules. Also exhibits THF-independent aldolase activity toward beta-hydroxyamino acids, producing glycine and aldehydes, via a retro-aldol mechanism. This is Serine hydroxymethyltransferase from Acidovorax ebreus (strain TPSY) (Diaphorobacter sp. (strain TPSY)).